The primary structure comprises 381 residues: Queuine tRNA-ribosyltransferase (381 aa).

Asp96 acts as the Proton acceptor in catalysis. Substrate is bound by residues 96–100, Asp150, Gln193, and Gly220; that span reads DSGGF. The tract at residues 251 to 257 is RNA binding; that stretch reads GVGSPDS. Asp270 functions as the Nucleophile in the catalytic mechanism. The interval 275–279 is RNA binding; important for wobble base 34 recognition; it reads TRIAR. Zn(2+) contacts are provided by Cys308, Cys310, Cys313, and His339.

The protein belongs to the queuine tRNA-ribosyltransferase family. Homodimer. Within each dimer, one monomer is responsible for RNA recognition and catalysis, while the other monomer binds to the replacement base PreQ1. The cofactor is Zn(2+).

It catalyses the reaction 7-aminomethyl-7-carbaguanine + guanosine(34) in tRNA = 7-aminomethyl-7-carbaguanosine(34) in tRNA + guanine. Its pathway is tRNA modification; tRNA-queuosine biosynthesis. Functionally, catalyzes the base-exchange of a guanine (G) residue with the queuine precursor 7-aminomethyl-7-deazaguanine (PreQ1) at position 34 (anticodon wobble position) in tRNAs with GU(N) anticodons (tRNA-Asp, -Asn, -His and -Tyr). Catalysis occurs through a double-displacement mechanism. The nucleophile active site attacks the C1' of nucleotide 34 to detach the guanine base from the RNA, forming a covalent enzyme-RNA intermediate. The proton acceptor active site deprotonates the incoming PreQ1, allowing a nucleophilic attack on the C1' of the ribose to form the product. After dissociation, two additional enzymatic reactions on the tRNA convert PreQ1 to queuine (Q), resulting in the hypermodified nucleoside queuosine (7-(((4,5-cis-dihydroxy-2-cyclopenten-1-yl)amino)methyl)-7-deazaguanosine). The chain is Queuine tRNA-ribosyltransferase from Bacillus pumilus (strain SAFR-032).